Here is a 185-residue protein sequence, read N- to C-terminus: Biofilm operon icaADBC HTH-type negative transcriptional regulator IcaR (185 aa).

Residues 1–59 form the HTH tetR-type domain; sequence MKDKIIDNAITLFSEKGYDGTTLDDISKSVNIKKASLYYHYDNKEEIYRKSVENCFNYF. The H-T-H motif DNA-binding region spans 22-41; that stretch reads TLDDISKSVNIKKASLYYHY.

Homodimer.

Functionally, represses transcription of the icaADBC operon necessary for biofilm production. The chain is Biofilm operon icaADBC HTH-type negative transcriptional regulator IcaR (icaR) from Staphylococcus epidermidis (strain ATCC 35984 / DSM 28319 / BCRC 17069 / CCUG 31568 / BM 3577 / RP62A).